The following is a 612-amino-acid chain: Dihydroxy-acid dehydratase (612 aa).

Asp-81 contributes to the Mg(2+) binding site. Cys-122 is a [2Fe-2S] cluster binding site. Asp-123 and Lys-124 together coordinate Mg(2+). The residue at position 124 (Lys-124) is an N6-carboxylysine. Position 193 (Cys-193) interacts with [2Fe-2S] cluster. Position 489 (Glu-489) interacts with Mg(2+). Ser-515 (proton acceptor) is an active-site residue.

It belongs to the IlvD/Edd family. In terms of assembly, homodimer. The cofactor is [2Fe-2S] cluster. Mg(2+) serves as cofactor.

It catalyses the reaction (2R)-2,3-dihydroxy-3-methylbutanoate = 3-methyl-2-oxobutanoate + H2O. It carries out the reaction (2R,3R)-2,3-dihydroxy-3-methylpentanoate = (S)-3-methyl-2-oxopentanoate + H2O. It functions in the pathway amino-acid biosynthesis; L-isoleucine biosynthesis; L-isoleucine from 2-oxobutanoate: step 3/4. The protein operates within amino-acid biosynthesis; L-valine biosynthesis; L-valine from pyruvate: step 3/4. Its function is as follows. Functions in the biosynthesis of branched-chain amino acids. Catalyzes the dehydration of (2R,3R)-2,3-dihydroxy-3-methylpentanoate (2,3-dihydroxy-3-methylvalerate) into 2-oxo-3-methylpentanoate (2-oxo-3-methylvalerate) and of (2R)-2,3-dihydroxy-3-methylbutanoate (2,3-dihydroxyisovalerate) into 2-oxo-3-methylbutanoate (2-oxoisovalerate), the penultimate precursor to L-isoleucine and L-valine, respectively. In Stenotrophomonas maltophilia (strain K279a), this protein is Dihydroxy-acid dehydratase.